The primary structure comprises 177 residues: MPVIEKKRTRDLPQINERIRFPKIRVIDTDGAQLGIMPPQEALQLAEEKELDLVLISDKADPPVCRIMDYGKYKFEQEKKAREARKKQHTADVKEVKMRYKIEEHDYNVRVKQAERFLKDGDKVKATVMFRGREIQHSDLAEDLLKRMATDLEPFGELQQAPKKEGRNMMMLISPKK.

The protein belongs to the IF-3 family. In terms of assembly, monomer.

The protein localises to the cytoplasm. Functionally, IF-3 binds to the 30S ribosomal subunit and shifts the equilibrium between 70S ribosomes and their 50S and 30S subunits in favor of the free subunits, thus enhancing the availability of 30S subunits on which protein synthesis initiation begins. The sequence is that of Translation initiation factor IF-3 from Nostoc punctiforme (strain ATCC 29133 / PCC 73102).